We begin with the raw amino-acid sequence, 383 residues long: GTP-binding protein 10 homolog (383 aa).

One can recognise an Obg domain in the interval 22–157; that stretch reads PTFLDTLRLA…RTVNLDLKLI (136 aa). An OBG-type G domain is found at 158–353; that stretch reads ADVGLVGFPN…VKSQLRRTLV (196 aa). GTP contacts are provided by residues 164-171, 211-215, and 287-290; these read GFPNAGKS, DLPGL, and NKMD.

It belongs to the TRAFAC class OBG-HflX-like GTPase superfamily. OBG GTPase family.

The protein resides in the nucleus. Its subcellular location is the nucleolus. Its function is as follows. May be involved in the ribosome maturation process. The chain is GTP-binding protein 10 homolog from Drosophila melanogaster (Fruit fly).